The primary structure comprises 602 residues: RNA-binding NOB1-like protein (602 aa).

Positions 1–25 (MDPKPTSMWSSIVKKDPPSKPPVND) are disordered. The PINc domain occupies 48 to 134 (VVDANAIIEG…LKLIALSYTL (87 aa)). 2 disordered regions span residues 258-278 (SQGQ…VSRS) and 301-331 (IQKD…GEDI). A compositionally biased stretch (basic and acidic residues) spans 301 to 329 (IQKDQEADKARHTKEANETHAKDSGKNGE). A coiled-coil region spans residues 331–365 (ISSILKDMRLEEESLRALQEETEETNAEATLINGE). The NOB1 zinc-finger motif lies at 452–522 (IRQLHRWILK…QYSIPMPKGG (71 aa)). 4 residues coordinate Zn(2+): cysteine 462, cysteine 465, cysteine 477, and cysteine 480.

This sequence belongs to the NOB1 family. Component of the small ribosomal subunit, ribosomal RNA processing complex (SSU RRP complex). As to expression, highly expressed in flowers and siliques and at lower levels in roots, hypocotyls, stems, leaves and seeds.

The protein resides in the nucleus. It is found in the nucleoplasm. Its subcellular location is the cytoplasm. In terms of biological role, essential protein required during embryogenesis and pollen development. Endonuclease cleaving pre-rRNA at the 3' end of the mature 18S rRNA (D-site); cleaves 20S pre-rRNA in the cytoplasm. Required for processing of 20S pre-rRNA precursor and biogenesis of 40S ribosomal subunits. The protein is RNA-binding NOB1-like protein of Arabidopsis thaliana (Mouse-ear cress).